The following is a 215-amino-acid chain: Adenylate kinase (215 aa).

10–15 (GAGKGT) is an ATP binding site. The interval 30-59 (STGDMFRAAMKNNTELGRKAKSFMDNGDLV) is NMP. Residues threonine 31, arginine 36, 57–59 (DLV), 85–88 (GFPR), and glutamine 92 contribute to the AMP site. Positions 126-163 (GRWICRTCGKTYHEIYNPPKVAGKCDLDGGELYQRDDD) are LID. Residue arginine 127 coordinates ATP. Zn(2+)-binding residues include cysteine 130 and cysteine 133. Residue 136 to 137 (TY) participates in ATP binding. Residues cysteine 150 and aspartate 153 each contribute to the Zn(2+) site. Positions 160 and 171 each coordinate AMP. Glutamine 199 is a binding site for ATP.

This sequence belongs to the adenylate kinase family. Monomer.

The protein resides in the cytoplasm. It carries out the reaction AMP + ATP = 2 ADP. It functions in the pathway purine metabolism; AMP biosynthesis via salvage pathway; AMP from ADP: step 1/1. Catalyzes the reversible transfer of the terminal phosphate group between ATP and AMP. Plays an important role in cellular energy homeostasis and in adenine nucleotide metabolism. The chain is Adenylate kinase from Listeria monocytogenes serotype 4a (strain HCC23).